Reading from the N-terminus, the 322-residue chain is MSDEMIYGDGAIRRQGLYGSSIENTYAGVLSFMRRNYSRDLEGVDVAVSGIPLDLSVTFRSGARMGPQAIRAASVQLAELKPYPWGFDPFEDLAVVDYGDCWFDAHNPLTIKPSIIEHARTILASGAKMLTFGGDHYVTYPLLIAHAEKYGKPLALLHFDAHCDTWPDDSPDSLNHGTMFYKAVKEGLIDPKKSVQVGIRTWNDDFMGLNVLGAPWVHDNGVDATIAEIKKTIGDAPVYVTFDIDCLDPSAAPGTGTPVPGGLTTAQALKIIRNLGDLNIVGMDVVEVAPSYDQSEITAIAAAHIACDMLCLMRNKKVAGTL.

His-136, Asp-160, His-162, Asp-164, Asp-243, and Asp-245 together coordinate Mn(2+).

Belongs to the arginase family. Agmatinase subfamily. It depends on Mn(2+) as a cofactor.

It catalyses the reaction agmatine + H2O = urea + putrescine. The protein operates within amine and polyamine biosynthesis; putrescine biosynthesis via agmatine pathway; putrescine from agmatine: step 1/1. Its function is as follows. Catalyzes the formation of putrescine from agmatine. This Chromobacterium violaceum (strain ATCC 12472 / DSM 30191 / JCM 1249 / CCUG 213 / NBRC 12614 / NCIMB 9131 / NCTC 9757 / MK) protein is Agmatinase.